The following is a 307-amino-acid chain: MSVTAAQVKELRELSGAGMMDCKAALAETNGDMDAAVDWLRKKGIAKADKKAGRTAAEGLIGVVSKDSHAVLVEINSETDFVARNDGFQDIVRNVATAALDTPGDVESVSVSLYPGSEKTVELTIKDAIGTIGENMTFRRSAKLSVENGVVATYIHNSVSDGLGKLGVLVAIETTGNKEAALAFGRQVAMHIAATNPLALTAQDVDAGAVEREKAIFSDQARQSGKPENIIEKMVEGRMRKFFEEVVLLSQAFVMNPDMTVEAALKDAEKSIGAPAKITGFIRFALGEGVEKEETDFAAEVAAAVKG.

Positions 79–82 (TDFV) are involved in Mg(2+) ion dislocation from EF-Tu.

Belongs to the EF-Ts family.

The protein resides in the cytoplasm. In terms of biological role, associates with the EF-Tu.GDP complex and induces the exchange of GDP to GTP. It remains bound to the aminoacyl-tRNA.EF-Tu.GTP complex up to the GTP hydrolysis stage on the ribosome. The chain is Elongation factor Ts from Bartonella tribocorum (strain CIP 105476 / IBS 506).